The chain runs to 372 residues: GTPase Obg (372 aa).

One can recognise an Obg domain in the interval 1–159 (MKFVDEATIE…RRLRLELKVL (159 aa)). In terms of domain architecture, OBG-type G spans 160-336 (ADVGLLGLPN…LIWALQDYLD (177 aa)). Residues 166–173 (GLPNAGKS), 191–195 (FTTLH), 213–216 (DIPG), 288–291 (NKLD), and 317–319 (SGL) contribute to the GTP site. Residues Ser-173 and Thr-193 each contribute to the Mg(2+) site. Residues 341–372 (KEQITQDKADGSYVHEDPRFDTTRDAPPSGKD) form a disordered region.

The protein belongs to the TRAFAC class OBG-HflX-like GTPase superfamily. OBG GTPase family. In terms of assembly, monomer. Requires Mg(2+) as cofactor.

Its subcellular location is the cytoplasm. An essential GTPase which binds GTP, GDP and possibly (p)ppGpp with moderate affinity, with high nucleotide exchange rates and a fairly low GTP hydrolysis rate. Plays a role in control of the cell cycle, stress response, ribosome biogenesis and in those bacteria that undergo differentiation, in morphogenesis control. This chain is GTPase Obg, found in Bordetella avium (strain 197N).